The chain runs to 266 residues: F-actin-capping protein subunit alpha (266 aa).

This sequence belongs to the F-actin-capping protein alpha subunit family. Heterodimer of an alpha and a beta subunit.

It localises to the cytoplasm. Its subcellular location is the cytoskeleton. In terms of biological role, F-actin-capping proteins bind in a Ca(2+)-independent manner to the fast growing ends of actin filaments (barbed end) thereby blocking the exchange of subunits at these ends. Unlike other capping proteins (such as gelsolin and severin), these proteins do not sever actin filaments. The sequence is that of F-actin-capping protein subunit alpha (CAP1) from Debaryomyces hansenii (strain ATCC 36239 / CBS 767 / BCRC 21394 / JCM 1990 / NBRC 0083 / IGC 2968) (Yeast).